The primary structure comprises 285 residues: Probable endonuclease 4 (285 aa).

His-69, His-109, Glu-145, Asp-179, His-182, His-216, Asp-229, His-231, and Glu-261 together coordinate Zn(2+).

It belongs to the AP endonuclease 2 family. It depends on Zn(2+) as a cofactor.

The enzyme catalyses Endonucleolytic cleavage to 5'-phosphooligonucleotide end-products.. Its function is as follows. Endonuclease IV plays a role in DNA repair. It cleaves phosphodiester bonds at apurinic or apyrimidinic (AP) sites, generating a 3'-hydroxyl group and a 5'-terminal sugar phosphate. This is Probable endonuclease 4 from Salmonella paratyphi A (strain AKU_12601).